The following is a 127-amino-acid chain: Protein ApaG (127 aa).

Positions 3–127 (NNPSSKIEVA…FVLSVPRTLH (125 aa)) constitute an ApaG domain.

This Xylella fastidiosa (strain M23) protein is Protein ApaG.